A 401-amino-acid polypeptide reads, in one-letter code: Dual specificity mitogen-activated protein kinase kinase 2 (401 aa).

Methionine 1 is modified (N-acetylmethionine). Residue serine 23 is modified to Phosphoserine. A Protein kinase domain is found at 72–370 (FERISELGAG…LKLLMNHAFI (299 aa)). ATP is bound by residues 78–86 (LGAGNGGVV) and lysine 101. The Proton acceptor role is filled by aspartate 194. Phosphoserine; by RAF occurs at positions 222 and 226. Residues 282–310 (PVVDGADGEPHSVSPRPRPPGRPISVGHG) form a disordered region. Serine 293, serine 295, and serine 306 each carry phosphoserine. 2 positions are modified to phosphothreonine: threonine 395 and threonine 397.

Belongs to the protein kinase superfamily. STE Ser/Thr protein kinase family. MAP kinase kinase subfamily. As to quaternary structure, interacts with MORG1. Interacts with SGK1. Interacts with KSR1. Interacts with KSR1 and BRAF; the interaction with KSR1 mediates KSR1-BRAF dimerization. Interacts with GLS. Mg(2+) is required as a cofactor. In terms of processing, phosphorylation on Ser/Thr by MAP kinase kinase kinases (RAF or MEKK1) positively regulates the kinase activity. Phosphorylated by MAP2K1/MEK1. Low levels of autophosphorylation have been observed. As to expression, expressed in adult intestine, kidney, liver, lung, pancreas, spleen, thymus, and at high levels in the neonatal brain. Lower expression is found in adult brain and heart.

The protein localises to the cytoplasm. It localises to the membrane. The catalysed reaction is L-seryl-[protein] + ATP = O-phospho-L-seryl-[protein] + ADP + H(+). It catalyses the reaction L-threonyl-[protein] + ATP = O-phospho-L-threonyl-[protein] + ADP + H(+). It carries out the reaction L-tyrosyl-[protein] + ATP = O-phospho-L-tyrosyl-[protein] + ADP + H(+). Its activity is regulated as follows. Inhibited by serine/threonine phosphatase 2A. Its function is as follows. Catalyzes the concomitant phosphorylation of a threonine and a tyrosine residue in a Thr-Glu-Tyr sequence located in MAP kinases. Activates the ERK1 and ERK2 MAP kinases. Activates BRAF in a KSR1 or KSR2-dependent manner; by binding to KSR1 or KSR2 releases the inhibitory intramolecular interaction between KSR1 or KSR2 protein kinase and N-terminal domains which promotes KSR1 or KSR2-BRAF dimerization and BRAF activation. This is Dual specificity mitogen-activated protein kinase kinase 2 (Map2k2) from Mus musculus (Mouse).